A 221-amino-acid polypeptide reads, in one-letter code: MSTIDILSPSGDNAGTVELPAEIFDVEKISIPLLHQVVVAQLAAARQGTHKVKRRGEVRGGGKKPYRQKGTGRARQGSTRAPQFAGGGVVHGPTPRDYSQRTPKKMKAAALRHALTDRARNARIHVITGVIEGETPSTKAAKSFLGKVSERKNVLLVIERSDEAALLSARNLPQVHILEPGQLNTYDVLVSDDVVFTQAAFESFVSGAPQSSAADTEGSEA.

A disordered region spans residues 44–102; the sequence is AARQGTHKVKRRGEVRGGGKKPYRQKGTGRARQGSTRAPQFAGGGVVHGPTPRDYSQRT. A compositionally biased stretch (basic residues) spans 61 to 72; it reads GGKKPYRQKGTG.

This sequence belongs to the universal ribosomal protein uL4 family. Part of the 50S ribosomal subunit.

In terms of biological role, one of the primary rRNA binding proteins, this protein initially binds near the 5'-end of the 23S rRNA. It is important during the early stages of 50S assembly. It makes multiple contacts with different domains of the 23S rRNA in the assembled 50S subunit and ribosome. Its function is as follows. Forms part of the polypeptide exit tunnel. In Streptomyces avermitilis (strain ATCC 31267 / DSM 46492 / JCM 5070 / NBRC 14893 / NCIMB 12804 / NRRL 8165 / MA-4680), this protein is Large ribosomal subunit protein uL4.